We begin with the raw amino-acid sequence, 438 residues long: GDP-mannose 6-dehydrogenase (438 aa).

The NAD(+) site is built by Tyr10, Val11, Asp30, Lys35, Thr86, and Thr124. 10 residues coordinate GDP-alpha-D-mannuronate: Glu161, Lys210, Asn214, His217, Asn225, Tyr256, Tyr257, Arg259, Phe262, and Gly265. Cys268 is an active-site residue. Position 271 (Lys271) interacts with NAD(+). Lys324 contributes to the GDP-alpha-D-mannuronate binding site. Arg331 lines the NAD(+) pocket.

This sequence belongs to the UDP-glucose/GDP-mannose dehydrogenase family.

It carries out the reaction GDP-alpha-D-mannose + 2 NAD(+) + H2O = GDP-alpha-D-mannuronate + 2 NADH + 3 H(+). Its pathway is glycan biosynthesis; alginate biosynthesis. In terms of biological role, catalyzes the oxidation of guanosine diphospho-D-mannose (GDP-D-mannose) to GDP-D-mannuronic acid, a precursor for alginate polymerization. The alginate layer causes a mucoid phenotype and provides a protective barrier against host immune defenses and antibiotics. This is GDP-mannose 6-dehydrogenase (algD) from Pseudomonas syringae pv. syringae.